The chain runs to 208 residues: ATP-dependent Clp protease proteolytic subunit (208 aa).

The active-site Nucleophile is the Ser-105. The active site involves His-130.

The protein belongs to the peptidase S14 family. In terms of assembly, fourteen ClpP subunits assemble into 2 heptameric rings which stack back to back to give a disk-like structure with a central cavity, resembling the structure of eukaryotic proteasomes.

The protein resides in the cytoplasm. The catalysed reaction is Hydrolysis of proteins to small peptides in the presence of ATP and magnesium. alpha-casein is the usual test substrate. In the absence of ATP, only oligopeptides shorter than five residues are hydrolyzed (such as succinyl-Leu-Tyr-|-NHMec, and Leu-Tyr-Leu-|-Tyr-Trp, in which cleavage of the -Tyr-|-Leu- and -Tyr-|-Trp bonds also occurs).. In terms of biological role, cleaves peptides in various proteins in a process that requires ATP hydrolysis. Has a chymotrypsin-like activity. Plays a major role in the degradation of misfolded proteins. The sequence is that of ATP-dependent Clp protease proteolytic subunit from Xanthomonas campestris pv. campestris (strain 8004).